The sequence spans 233 residues: Small ribosomal subunit protein uS2 (233 aa).

This sequence belongs to the universal ribosomal protein uS2 family.

The protein is Small ribosomal subunit protein uS2 of Clostridium botulinum (strain Alaska E43 / Type E3).